Reading from the N-terminus, the 208-residue chain is Uracil phosphoribosyltransferase (208 aa).

5-phospho-alpha-D-ribose 1-diphosphate-binding positions include arginine 78, arginine 103, and 130-138 (DPMLATGGS). Uracil-binding positions include isoleucine 193 and 198 to 200 (GDA). Aspartate 199 serves as a coordination point for 5-phospho-alpha-D-ribose 1-diphosphate.

The protein belongs to the UPRTase family. Mg(2+) serves as cofactor.

The enzyme catalyses UMP + diphosphate = 5-phospho-alpha-D-ribose 1-diphosphate + uracil. Its pathway is pyrimidine metabolism; UMP biosynthesis via salvage pathway; UMP from uracil: step 1/1. With respect to regulation, allosterically activated by GTP. In terms of biological role, catalyzes the conversion of uracil and 5-phospho-alpha-D-ribose 1-diphosphate (PRPP) to UMP and diphosphate. In Enterobacter sp. (strain 638), this protein is Uracil phosphoribosyltransferase.